The chain runs to 696 residues: MARLRVYELARQLEMDTRELMKELHELGIEIKSHMSYIDEETVNLLLEMYGTQEEEEELIEEYEEYEEIDEEVNGKHFKNKEGSLEKLQTNKKKNSVKITEEDLKLDKFAEKIGIPQNKIIQDFFMKGEILKPGQSLNLQLAKKIAKMYDVRISFENEEKEEVIENPLIEIEKYFEEKYKNPENLKERPPVVTVMGHVDHGKTTLLDYIRNTRVAEREEGGITQSIGAYQVEVNGKKITFIDTPGHEIFTEMRARGAQATDIVVLVVAADDGVMPQTIEAYNHAKSANVPIIVAINKIDKPNANVEKTKQELVNKLNLIPEEWGGDTIVVPISAKKGQNVDTLLEMILLVAEMQEIKGIPDGPVRAVTIESKLDKGFGPVANVIVKDGILKIGDYIISGKVMGKVKALVNDQGKRVKEAGPSTPVMIVGFEELPDSHGIVYSVDSLDKAREISEKIREIEQKELRRKRHMKLEEILKMMEQSERKELRLVLKADTQGSLMALSGAINKLRSEEISINIIHSGVGSITVSDVMLATASDAIILGFRVKADSQARKMAEAEGIQIKTYTIVYKLIEELQAALEGMLEPEEIEEITGRGEIKKVFKIKKVGSIAGVQMIEGYVEKDGLVKVYRSGKLVYEGKIESLKHYQQDVKRVDAPQECGIKLENFDDIKEGDELEFSVLKKVARKLTFEEDKGEK.

One can recognise a tr-type G domain in the interval 187 to 361; that stretch reads ERPPVVTVMG…EMQEIKGIPD (175 aa). Positions 196–203 are G1; sequence GHVDHGKT. 196–203 contacts GTP; it reads GHVDHGKT. A G2 region spans residues 221–225; it reads GITQS. The segment at 242-245 is G3; the sequence is DTPG. GTP contacts are provided by residues 242–246 and 296–299; these read DTPGH and NKID. Residues 296–299 form a G4 region; it reads NKID. Positions 333-335 are G5; it reads SAK.

It belongs to the TRAFAC class translation factor GTPase superfamily. Classic translation factor GTPase family. IF-2 subfamily.

The protein resides in the cytoplasm. Functionally, one of the essential components for the initiation of protein synthesis. Protects formylmethionyl-tRNA from spontaneous hydrolysis and promotes its binding to the 30S ribosomal subunits. Also involved in the hydrolysis of GTP during the formation of the 70S ribosomal complex. In Thermosipho africanus (strain TCF52B), this protein is Translation initiation factor IF-2.